Consider the following 262-residue polypeptide: Putative hydro-lyase cu1581 (262 aa).

This sequence belongs to the D-glutamate cyclase family.

The polypeptide is Putative hydro-lyase cu1581 (Corynebacterium urealyticum (strain ATCC 43042 / DSM 7109)).